Reading from the N-terminus, the 84-residue chain is RNA-binding protein SAHV_0542 (84 aa).

The protein belongs to the eukaryotic ribosomal protein eL8 family.

The polypeptide is RNA-binding protein SAHV_0542 (Staphylococcus aureus (strain Mu3 / ATCC 700698)).